Reading from the N-terminus, the 94-residue chain is Large ribosomal subunit protein uL23 (94 aa).

The protein belongs to the universal ribosomal protein uL23 family. As to quaternary structure, part of the 50S ribosomal subunit. Contacts protein L29, and trigger factor when it is bound to the ribosome.

Its function is as follows. One of the early assembly proteins it binds 23S rRNA. One of the proteins that surrounds the polypeptide exit tunnel on the outside of the ribosome. Forms the main docking site for trigger factor binding to the ribosome. The chain is Large ribosomal subunit protein uL23 from Dehalococcoides mccartyi (strain ATCC BAA-2266 / KCTC 15142 / 195) (Dehalococcoides ethenogenes (strain 195)).